Here is a 442-residue protein sequence, read N- to C-terminus: Transforming growth factor beta-2 proprotein (442 aa).

The N-terminal stretch at 1-20 (MHYCVLRTFLLLHLVPVALS) is a signal peptide. Asn72, Asn168, and Asn269 each carry an N-linked (GlcNAc...) asparagine glycan. 4 disulfides stabilise this stretch: Cys337-Cys346, Cys345-Cys408, Cys374-Cys439, and Cys378-Cys441.

The protein belongs to the TGF-beta family. In terms of assembly, interacts with the serine proteases, HTRA1 and HTRA3. Interacts with ASPN. Interacts with MFAP5. As to quaternary structure, interacts with Transforming growth factor beta-2 (TGF-beta-2) chain; interaction is non-covalent and maintains (TGF-beta-2) in a latent state. Interacts with LRRC32/GARP; leading to regulate activation of TGF-beta-2. Interacts with NREP; the interaction results in a decrease in TGFB2 autoinduction. Transforming growth factor beta-2: Homodimer; disulfide-linked. Transforming growth factor beta-2: Interacts with TGF-beta receptors (TGFBR1 and TGFBR2), leading to signal transduction. Post-translationally, the precursor proprotein is cleaved in the Golgi apparatus to form Transforming growth factor beta-2 (TGF-beta-2) and Latency-associated peptide (LAP) chains, which remain non-covalently linked, rendering TGF-beta-2 inactive. As to expression, expressed in cardiomyocytes. Expressed in the aorta, primary bronchus, uterus, heart, skeletal muscle, sciatic nerve and spinal cord but not in the intestine.

The protein localises to the secreted. It is found in the extracellular space. Its subcellular location is the extracellular matrix. Its function is as follows. Precursor of the Latency-associated peptide (LAP) and Transforming growth factor beta-2 (TGF-beta-2) chains, which constitute the regulatory and active subunit of TGF-beta-2, respectively. Functionally, required to maintain the Transforming growth factor beta-2 (TGF-beta-2) chain in a latent state during storage in extracellular matrix. Associates non-covalently with TGF-beta-2 and regulates its activation via interaction with 'milieu molecules', such as LTBP1 and LRRC32/GARP, that control activation of TGF-beta-2. Multifunctional protein that regulates various processes such as angiogenesis and heart development. Activation into mature form follows different steps: following cleavage of the proprotein in the Golgi apparatus, Latency-associated peptide (LAP) and Transforming growth factor beta-2 (TGF-beta-2) chains remain non-covalently linked rendering TGF-beta-2 inactive during storage in extracellular matrix. At the same time, LAP chain interacts with 'milieu molecules', such as LTBP1 and LRRC32/GARP, that control activation of TGF-beta-2 and maintain it in a latent state during storage in extracellular milieus. Once activated following release of LAP, TGF-beta-2 acts by binding to TGF-beta receptors (TGFBR1 and TGFBR2), which transduce signal. This chain is Transforming growth factor beta-2 proprotein (Tgfb2), found in Rattus norvegicus (Rat).